A 34-amino-acid polypeptide reads, in one-letter code: MSDIN-like toxin proprotein 5 (34 aa).

The propeptide occupies 1 to 10 (MSDINTARLP). Residues 11 to 20 (YVVFMSFIPP) constitute a cross-link (cyclopeptide (Tyr-Pro)). A propeptide spanning residues 21–34 (CVNDDIQVVLTRGE) is cleaved from the precursor.

It belongs to the MSDIN fungal toxin family. In terms of processing, processed by the macrocyclase-peptidase enzyme POPB to yield a toxic cyclic decapeptide. POPB first removes 10 residues from the N-terminus. Conformational trapping of the remaining peptide forces the enzyme to release this intermediate rather than proceed to macrocyclization. The enzyme rebinds the remaining peptide in a different conformation and catalyzes macrocyclization of the N-terminal 10 residues.

In terms of biological role, probable toxin that belongs to the MSDIN-like toxin family responsible for a large number of food poisoning cases and deaths. This chain is MSDIN-like toxin proprotein 5, found in Amanita bisporigera (Destroying angel).